The chain runs to 605 residues: Elongation factor 4 (605 aa).

The tr-type G domain maps to 8-190 (RRVRNFCIVA…AIITRIPPPQ (183 aa)). GTP is bound by residues 20 to 25 (DHGKST) and 137 to 140 (NKID).

The protein belongs to the TRAFAC class translation factor GTPase superfamily. Classic translation factor GTPase family. LepA subfamily.

It is found in the cell inner membrane. The catalysed reaction is GTP + H2O = GDP + phosphate + H(+). In terms of biological role, required for accurate and efficient protein synthesis under certain stress conditions. May act as a fidelity factor of the translation reaction, by catalyzing a one-codon backward translocation of tRNAs on improperly translocated ribosomes. Back-translocation proceeds from a post-translocation (POST) complex to a pre-translocation (PRE) complex, thus giving elongation factor G a second chance to translocate the tRNAs correctly. Binds to ribosomes in a GTP-dependent manner. The polypeptide is Elongation factor 4 (Treponema pallidum (strain Nichols)).